The following is an 82-amino-acid chain: MAAGSTGERPFFEIITSIRYWIIHAVTLPAIFIAGFLFVYTGLAYDAFGTPRPDSYFQASESKAPVVTQRYDAKSQLDLRTK.

The chain crosses the membrane as a helical span at residues 22–36; that stretch reads IIHAVTLPAIFIAGF. His24 provides a ligand contact to heme.

The protein belongs to the PsbE/PsbF family. Heterodimer of an alpha subunit and a beta subunit. PSII is composed of 1 copy each of membrane proteins PsbA, PsbB, PsbC, PsbD, PsbE, PsbF, PsbH, PsbI, PsbJ, PsbK, PsbL, PsbM, PsbT, PsbX, PsbY, Psb30/Ycf12, peripheral proteins PsbO, CyanoQ (PsbQ), PsbU, PsbV and a large number of cofactors. It forms dimeric complexes. The cofactor is heme b.

The protein resides in the cellular thylakoid membrane. Its function is as follows. This b-type cytochrome is tightly associated with the reaction center of photosystem II (PSII). PSII is a light-driven water:plastoquinone oxidoreductase that uses light energy to abstract electrons from H(2)O, generating O(2) and a proton gradient subsequently used for ATP formation. It consists of a core antenna complex that captures photons, and an electron transfer chain that converts photonic excitation into a charge separation. This Prochlorococcus marinus (strain MIT 9515) protein is Cytochrome b559 subunit alpha.